The sequence spans 368 residues: F-box/kelch-repeat protein At5g51250 (368 aa).

The F-box domain occupies Met-1 to Arg-44. 3 Kelch repeats span residues Asp-116 to Arg-163, Ile-165 to Gly-218, and Leu-260 to Lys-304.

In Arabidopsis thaliana (Mouse-ear cress), this protein is F-box/kelch-repeat protein At5g51250.